Reading from the N-terminus, the 316-residue chain is MTKEFHHVTVLLHETIDMLDVKPDGIYVDATLGGAGHSEYLLSKLSEKGHLYAFDQDQNAIDNAQKRLAPYIEKGMVTFIKDNFRHLQACLREAGVQEIDGICYDLGVSSPQLDQRERGFSYKKDAPLDMRMNQDASLTAYEVVNNYDYHDLVRIFFKYGEDKFSKQIARKIEQAREVKPIETTTELAEIIKLVKPAKELKKKGHPAKQIFQAIRIEVNDELGAADESIQQAMDMLALDGRISVITFHSLEDRLTKQLFKEASTVEVPKGLPFIPDDLKPKMELVSRKPILPSAEELEANNRSHSAKLRVVRKIHK.

Residues alanine 35–histidine 37, aspartate 55, phenylalanine 84, aspartate 105, and glutamine 112 contribute to the S-adenosyl-L-methionine site.

It belongs to the methyltransferase superfamily. RsmH family.

It localises to the cytoplasm. It catalyses the reaction cytidine(1402) in 16S rRNA + S-adenosyl-L-methionine = N(4)-methylcytidine(1402) in 16S rRNA + S-adenosyl-L-homocysteine + H(+). Functionally, specifically methylates the N4 position of cytidine in position 1402 (C1402) of 16S rRNA. This is Ribosomal RNA small subunit methyltransferase H from Streptococcus pneumoniae serotype 4 (strain ATCC BAA-334 / TIGR4).